The primary structure comprises 218 residues: Thiopurine S-methyltransferase (218 aa).

Tryptophan 10, leucine 45, glutamate 66, and arginine 123 together coordinate S-adenosyl-L-methionine.

It belongs to the class I-like SAM-binding methyltransferase superfamily. TPMT family.

The protein resides in the cytoplasm. It carries out the reaction S-adenosyl-L-methionine + a thiopurine = S-adenosyl-L-homocysteine + a thiopurine S-methylether.. The sequence is that of Thiopurine S-methyltransferase from Shewanella baltica (strain OS185).